The primary structure comprises 497 residues: Probable cytosol aminopeptidase (497 aa).

Residues Lys-263 and Asp-268 each coordinate Mn(2+). Lys-275 is a catalytic residue. The Mn(2+) site is built by Asp-286, Asp-345, and Glu-347. Residue Arg-349 is part of the active site.

It belongs to the peptidase M17 family. Mn(2+) serves as cofactor.

Its subcellular location is the cytoplasm. The enzyme catalyses Release of an N-terminal amino acid, Xaa-|-Yaa-, in which Xaa is preferably Leu, but may be other amino acids including Pro although not Arg or Lys, and Yaa may be Pro. Amino acid amides and methyl esters are also readily hydrolyzed, but rates on arylamides are exceedingly low.. It carries out the reaction Release of an N-terminal amino acid, preferentially leucine, but not glutamic or aspartic acids.. Presumably involved in the processing and regular turnover of intracellular proteins. Catalyzes the removal of unsubstituted N-terminal amino acids from various peptides. In Brucella ovis (strain ATCC 25840 / 63/290 / NCTC 10512), this protein is Probable cytosol aminopeptidase.